Reading from the N-terminus, the 368-residue chain is Phospho-N-acetylmuramoyl-pentapeptide-transferase (368 aa).

10 helical membrane passes run 34–54 (GAVVTGALFVFLFGPWIIDHL), 79–99 (TPTMGGLMILSGLVVSTVLWA), 102–122 (LNPYVWIVLAVTLGFGFVGFY), 140–160 (ARILIEAGIALVACYALVRLG), 176–196 (LVIKFGWMYVIFGAFVIVGAG), 207–227 (GLAIVPVMIASASFGLIAYLA), 247–267 (LAVLCGAVLGAGLGFLWFNAP), 271–291 (IFMGDTGSLALGGMLGSIAVA), 296–316 (IVLAVIGGLFVLEAVSVIVQV), and 345–365 (QIVIRFWIISVMLALVGLSTL).

This sequence belongs to the glycosyltransferase 4 family. MraY subfamily. Requires Mg(2+) as cofactor.

It is found in the cell inner membrane. It catalyses the reaction UDP-N-acetyl-alpha-D-muramoyl-L-alanyl-gamma-D-glutamyl-meso-2,6-diaminopimeloyl-D-alanyl-D-alanine + di-trans,octa-cis-undecaprenyl phosphate = di-trans,octa-cis-undecaprenyl diphospho-N-acetyl-alpha-D-muramoyl-L-alanyl-D-glutamyl-meso-2,6-diaminopimeloyl-D-alanyl-D-alanine + UMP. The protein operates within cell wall biogenesis; peptidoglycan biosynthesis. In terms of biological role, catalyzes the initial step of the lipid cycle reactions in the biosynthesis of the cell wall peptidoglycan: transfers peptidoglycan precursor phospho-MurNAc-pentapeptide from UDP-MurNAc-pentapeptide onto the lipid carrier undecaprenyl phosphate, yielding undecaprenyl-pyrophosphoryl-MurNAc-pentapeptide, known as lipid I. The sequence is that of Phospho-N-acetylmuramoyl-pentapeptide-transferase from Bradyrhizobium sp. (strain BTAi1 / ATCC BAA-1182).